A 130-amino-acid chain; its full sequence is Fluoride-specific ion channel FluC (130 aa).

Helical transmembrane passes span 7 to 27, 36 to 56, 69 to 89, and 99 to 119; these read VLAICIGASLGALARWRLGLW, LGTLAANLIGGYLIGICVAVF, ALITGFLGGLTTFSSFSAEVV, and LGFGTAGLHLFGSLLLTLAGI. Residues glycine 76 and threonine 79 each coordinate Na(+).

Belongs to the fluoride channel Fluc/FEX (TC 1.A.43) family.

The protein resides in the cell inner membrane. It catalyses the reaction fluoride(in) = fluoride(out). Its activity is regulated as follows. Na(+) is not transported, but it plays an essential structural role and its presence is essential for fluoride channel function. Fluoride-specific ion channel. Important for reducing fluoride concentration in the cell, thus reducing its toxicity. The sequence is that of Fluoride-specific ion channel FluC from Albidiferax ferrireducens (strain ATCC BAA-621 / DSM 15236 / T118) (Rhodoferax ferrireducens).